The chain runs to 447 residues: Argininosuccinate synthase (447 aa).

Residues 17–25 and alanine 43 each bind ATP; that span reads AFSGGLDTS. Tyrosine 99 contacts L-citrulline. ATP is bound by residues glycine 129 and threonine 131. The L-aspartate site is built by threonine 131, asparagine 135, and aspartate 136. Asparagine 135 lines the L-citrulline pocket. Aspartate 136 is an ATP binding site. The L-citrulline site is built by arginine 139 and serine 192. Residue aspartate 194 coordinates ATP. Threonine 201, glutamate 203, and glutamate 280 together coordinate L-citrulline.

This sequence belongs to the argininosuccinate synthase family. Type 2 subfamily. In terms of assembly, homotetramer.

Its subcellular location is the cytoplasm. It carries out the reaction L-citrulline + L-aspartate + ATP = 2-(N(omega)-L-arginino)succinate + AMP + diphosphate + H(+). It functions in the pathway amino-acid biosynthesis; L-arginine biosynthesis; L-arginine from L-ornithine and carbamoyl phosphate: step 2/3. This Citrobacter koseri (strain ATCC BAA-895 / CDC 4225-83 / SGSC4696) protein is Argininosuccinate synthase.